A 273-amino-acid polypeptide reads, in one-letter code: NAD-dependent protein deacylase (273 aa).

The region spanning 20 to 272 is the Deacetylase sirtuin-type domain; the sequence is RERLRQRIFF…PEFVEKLLEG (253 aa). An NAD(+)-binding site is contributed by 48–67; sequence GAGISAESGIRTFRAADGLW. Substrate contacts are provided by Y92 and R95. An NAD(+)-binding site is contributed by 129–132; that stretch reads QNID. H147 functions as the Proton acceptor in the catalytic mechanism. The Zn(2+) site is built by C155 and C174. NAD(+) contacts are provided by residues 214–216, 240–242, and A258; these read GTS and NLE.

The protein belongs to the sirtuin family. Class III subfamily. It depends on Zn(2+) as a cofactor.

Its subcellular location is the cytoplasm. The catalysed reaction is N(6)-acetyl-L-lysyl-[protein] + NAD(+) + H2O = 2''-O-acetyl-ADP-D-ribose + nicotinamide + L-lysyl-[protein]. It carries out the reaction N(6)-succinyl-L-lysyl-[protein] + NAD(+) + H2O = 2''-O-succinyl-ADP-D-ribose + nicotinamide + L-lysyl-[protein]. The enzyme catalyses N(6)-(2-hydroxyisobutanoyl)-L-lysyl-[protein] + NAD(+) + H2O = 2''-O-(2-hydroxyisobutanoyl)-ADP-D-ribose + nicotinamide + L-lysyl-[protein]. Functionally, NAD-dependent lysine deacetylase that specifically removes acetyl groups on target proteins. Also acts as a protein-lysine deacylase by mediating protein desuccinylation and de-2-hydroxyisobutyrylation. Modulates the activities of several proteins which are inactive in their acylated form. The sequence is that of NAD-dependent protein deacylase from Shigella flexneri.